Reading from the N-terminus, the 435-residue chain is uncharacterized protein (435 aa).

12 helical membrane-spanning segments follow: residues 14–34 (VSMA…GVGA), 44–64 (TFIL…KLGA), 84–104 (IITG…IALF), 123–143 (FNIA…NFFG), 153–173 (FIVL…LITI), 187–207 (VSGM…FGVI), 224–244 (AIFI…ISAI), 267–287 (FLGN…ISSA), 324–344 (LYIT…EGVA), 346–366 (ITSA…YILI), 375–395 (IVIF…YYQW), and 400–420 (FVFY…IIYR).

It localises to the cell membrane. This is an uncharacterized protein from Methanocaldococcus jannaschii (strain ATCC 43067 / DSM 2661 / JAL-1 / JCM 10045 / NBRC 100440) (Methanococcus jannaschii).